A 236-amino-acid polypeptide reads, in one-letter code: MKKKLYEGSSKILYSAEEDFLLIMAFSDKAVLETGETVDISGKGVLNNSISSFLMGKLEMIGIENHLIEKINMREQLIQYVEVFPIQVIISSVACGRFVKEFGMDEGYVFDKPIIDFKVRSREFNYPIVNEYQIFNFGWLTMDEIRTVQAQTLRIYDFLSGLFIGIGIRLVECKLEFGRVFNGEESIIMLTDEISPDNCRLWHINSNEKLGFELIENEPNKAFESYQLIANRLKEK.

It belongs to the SAICAR synthetase family.

The enzyme catalyses 5-amino-1-(5-phospho-D-ribosyl)imidazole-4-carboxylate + L-aspartate + ATP = (2S)-2-[5-amino-1-(5-phospho-beta-D-ribosyl)imidazole-4-carboxamido]succinate + ADP + phosphate + 2 H(+). Its pathway is purine metabolism; IMP biosynthesis via de novo pathway; 5-amino-1-(5-phospho-D-ribosyl)imidazole-4-carboxamide from 5-amino-1-(5-phospho-D-ribosyl)imidazole-4-carboxylate: step 1/2. In Rickettsia typhi (strain ATCC VR-144 / Wilmington), this protein is Phosphoribosylaminoimidazole-succinocarboxamide synthase.